Consider the following 1068-residue polypeptide: Focal adhesion kinase 1 (1068 aa).

The interval 1 to 26 is disordered; the sequence is MAAAYLDPNLNHNPSTNAKSRLSTGM. Polar residues predominate over residues 10–23; it reads LNHNPSTNAKSRLS. The FERM domain occupies 35–355; sequence RVLRVFHYFE…GYCRLVSGAS (321 aa). Tyrosine 403 and tyrosine 413 each carry phosphotyrosine. The 259-residue stretch at 435–693 folds into the Protein kinase domain; sequence IELGRCIGEG…ELKAQLSTIL (259 aa). ATP-binding positions include 441–447, lysine 467, and 513–515; these read IGEGQFG and ELC. The Proton acceptor role is filled by aspartate 559. A phosphotyrosine; by autocatalysis mark is found at tyrosine 589 and tyrosine 590. The span at 699 to 710 shows a compositional bias: basic and acidic residues; sequence QQEERMRMESRR. Disordered stretches follow at residues 699–750 and 869–912; these read QQEE…QHMM and GNQH…DGYN. Phosphotyrosine occurs at positions 874 and 941.

It belongs to the protein kinase superfamily. Tyr protein kinase family. FAK subfamily. Phosphorylated on tyrosine residues; phosphorylated kinase is first detected during gastrulation, suggesting that tyrosine phosphorylation is developmentally regulated.

It localises to the cell junction. The protein resides in the focal adhesion. It is found in the cell membrane. Its subcellular location is the cytoplasm. The protein localises to the cytoskeleton. It localises to the cilium basal body. The enzyme catalyses L-tyrosyl-[protein] + ATP = O-phospho-L-tyrosyl-[protein] + ADP + H(+). In terms of biological role, non-receptor protein-tyrosine kinase implicated in signaling pathways involved in cell motility, proliferation and apoptosis. Activated by tyrosine-phosphorylation in response to either integrin clustering induced by cell adhesion or antibody cross-linking, or via G-protein coupled receptor (GPCR) occupancy by ligands such as bombesin or lysophosphatidic acid, or via LDL receptor occupancy. Microtubule-induced dephosphorylation at Tyr-397 is crucial for the induction of focal adhesion disassembly. In Xenopus laevis (African clawed frog), this protein is Focal adhesion kinase 1 (ptk2).